A 108-amino-acid polypeptide reads, in one-letter code: UPF0102 protein Sfri_0388 (108 aa).

Belongs to the UPF0102 family.

The chain is UPF0102 protein Sfri_0388 from Shewanella frigidimarina (strain NCIMB 400).